Here is a 192-residue protein sequence, read N- to C-terminus: Imidazoleglycerol-phosphate dehydratase (192 aa).

It belongs to the imidazoleglycerol-phosphate dehydratase family.

Its subcellular location is the cytoplasm. It carries out the reaction D-erythro-1-(imidazol-4-yl)glycerol 3-phosphate = 3-(imidazol-4-yl)-2-oxopropyl phosphate + H2O. Its pathway is amino-acid biosynthesis; L-histidine biosynthesis; L-histidine from 5-phospho-alpha-D-ribose 1-diphosphate: step 6/9. This is Imidazoleglycerol-phosphate dehydratase from Vesicomyosocius okutanii subsp. Calyptogena okutanii (strain HA).